We begin with the raw amino-acid sequence, 217 residues long: CLA biosynthesis enone reductase (217 aa).

Residues arginine 20, serine 22, and arginine 24 each contribute to the FMN site. Cysteine 51 is a binding site for 10-oxooctadecanoate. FMN is bound by residues asparagine 78 and glutamine 81. Residue arginine 118 coordinates 10-oxooctadecanoate. 4 residues coordinate FMN: asparagine 165, serine 168, glycine 169, and arginine 206.

Belongs to the nitroreductase family. Homodimer. FMN is required as a cofactor.

It carries out the reaction 10-oxo-(11E)-octadecenoate + NADH + H(+) = 10-oxooctadecanoate + NAD(+). It participates in lipid metabolism; fatty acid metabolism. In terms of biological role, is involved in a saturation metabolic pathway of polyunsaturated fatty acids, that detoxifies unsaturated fatty acids and generates hydroxy fatty acids, oxo fatty acids, conjugated fatty acids such as conjugated linoleic acids (CLAs), and partially saturated trans-fatty acids as intermediates. CLA-ER catalyzes the saturation of the carbon-carbon double bond in 10-oxo-(11E)-octadecenoate to produce 10-oxooctadecanoate, during linoleate metabolism. As part of the gut microbiome, this enzyme modifies host fatty acid composition and is expected to improve human health by altering lipid metabolism related to the onset of metabolic syndrome. The polypeptide is CLA biosynthesis enone reductase (Lactiplantibacillus plantarum (Lactobacillus plantarum)).